Consider the following 479-residue polypeptide: Zinc finger and SCAN domain-containing protein 26 (479 aa).

Lys17 participates in a covalent cross-link: Glycyl lysine isopeptide (Lys-Gly) (interchain with G-Cter in SUMO2). The 83-residue stretch at 51–133 folds into the SCAN box domain; the sequence is CKRFRQLRYE…VFLEDLQLEL (83 aa). Positions 155-187 are disordered; that stretch reads TAPGKATPERQVQPEGDVPQPEREKGEAKRIEN. A compositionally biased stretch (basic and acidic residues) spans 174 to 187; that stretch reads QPEREKGEAKRIEN. The C2H2-type 1; degenerate zinc finger occupies 232–254; it reads CKCSEYGQAFFQHSDLIKHESSH. C2H2-type zinc fingers lie at residues 283–305, 311–333, 339–361, 367–389, 395–417, 423–445, and 451–473; these read HQCHECGKAFQRSSHLVRHQKIH, YQCKECGKVFSQNAGLLEHLRIH, YLCIHCGKNFRRSSHLNRHQRIH, CQCKECGKTFSQALLLTHHQRIH, HQCNECGKTFSLTSDLIRHHRIH, FKCTICQKAFRLNSHLAQHVRIH, and YKCNECGEAFRQRSGLFQHQRYH.

It is found in the nucleus. In terms of biological role, may be involved in transcriptional regulation. The sequence is that of Zinc finger and SCAN domain-containing protein 26 (ZSCAN26) from Bos taurus (Bovine).